A 190-amino-acid polypeptide reads, in one-letter code: Vespryn-21 (190 aa).

An N-terminal signal peptide occupies residues 1-20 (MLLFTLCFFADLENGGKALA). Residues 21–127 (SPPGKWQKAD…LIWQRGLWFL (107 aa)) form the B30.2/SPRY domain. Residues 128–190 (QRLETDSDKL…LGGGVSLTNL (63 aa)) constitute a propeptide that is removed on maturation.

This sequence belongs to the ohanin/vespryn family. In terms of tissue distribution, expressed by the venom gland.

The protein localises to the secreted. Its function is as follows. Neurotoxin that produces dose-dependent hypolocomotion and hyperalgesia in mice. May directly act on the central nervous system, as it is 6500-fold more potent when administered intracerebroventricularly than intraperitoneal. The polypeptide is Vespryn-21 (Drysdalia coronoides (White-lipped snake)).